Reading from the N-terminus, the 129-residue chain is Small ribosomal subunit protein uS11 (129 aa).

The disordered stretch occupies residues 109–129; sequence VDDTPVPHNGCRPKKKFRKAS. Positions 119–129 are enriched in basic residues; that stretch reads CRPKKKFRKAS.

Belongs to the universal ribosomal protein uS11 family. In terms of assembly, part of the 30S ribosomal subunit. Interacts with proteins S7 and S18. Binds to the C-terminus of IF-3; however exactly how IF-3 interacts with the 30S subunit is unclear.

Functionally, located on the upper part of the platform of the 30S subunit, where it bridges several disparate RNA helices of the 16S rRNA. Forms part of the Shine-Dalgarno cleft in the 70S ribosome. The chain is Small ribosomal subunit protein uS11 (rpsK) from Thermus thermophilus (strain ATCC BAA-163 / DSM 7039 / HB27).